The following is a 776-amino-acid chain: DExH-box ATP-dependent RNA helicase DExH18, mitochondrial (776 aa).

The N-terminal 84 residues, Met-1–Asn-84, are a transit peptide targeting the mitochondrion. Residues Thr-80–Tyr-101 form a disordered region. Residues Gly-85–Tyr-101 are compositionally biased toward acidic residues. Positions Phe-268–Lys-426 constitute a Helicase ATP-binding domain. Gly-281–Thr-288 contacts ATP. The DEIH box; degenerate motif lies at Asp-361 to Gln-364. Positions Thr-427–Ala-595 constitute a Helicase C-terminal domain.

Belongs to the DExH box helicase family. In terms of assembly, homodimer; in free form. Component of the mitochondrial degradosome (mtEXO) complex which is a heteropentamer containing 2 copies of SUPV3L1 and 3 copies of PNPT1. Mg(2+) is required as a cofactor. Requires Mn(2+) as cofactor.

Its subcellular location is the nucleus. The protein resides in the mitochondrion matrix. The protein localises to the mitochondrion nucleoid. It carries out the reaction ATP + H2O = ADP + phosphate + H(+). Functionally, major helicase player in mitochondrial RNA metabolism. Component of the mitochondrial degradosome (mtEXO) complex, that degrades 3' overhang double-stranded RNA with a 3'-to-5' directionality in an ATP-dependent manner. ATPase and ATP-dependent multisubstrate helicase, able to unwind double-stranded (ds) DNA and RNA, and RNA/DNA heteroduplexes in the 5'-to-3' direction. Plays a role in the RNA surveillance system in mitochondria; regulates the stability of mature mRNAs, the removal of aberrantly formed mRNAs and the rapid degradation of non coding processing intermediates. The sequence is that of DExH-box ATP-dependent RNA helicase DExH18, mitochondrial from Arabidopsis thaliana (Mouse-ear cress).